A 578-amino-acid polypeptide reads, in one-letter code: Nuclear receptor subfamily 1 group D member 2 (578 aa).

The tract at residues 1–60 is required for phosphorylation by CSNK1E and cytoplasmic localization; sequence MELNAGGVIAYISSSSSASSPASCHSEGSENSFQSSSSSVPSSPNSSNCDANGNPKNTDV. The interval 1-99 is modulating; sequence MELNAGGVIA…HSGMTKFSGM (99 aa). Low complexity predominate over residues 13–47; it reads SSSSSASSPASCHSEGSENSFQSSSSSVPSSPNSS. A disordered region spans residues 13–89; sequence SSSSSASSPA…KPGAPGMTKS (77 aa). Phosphoserine; by GSK3-beta is present on serine 46. A compositionally biased stretch (polar residues) spans 48–61; sequence NCDANGNPKNTDVS. The segment at residues 100–176 is a DNA-binding region (nuclear receptor); sequence VLLCKVCGDV…VGMSRDAVRF (77 aa). 2 consecutive NR C4-type zinc fingers follow at residues 103–123 and 140–164; these read CKVC…CEGC and CLKN…FKKC. An N6-acetyllysine; by KAT5 mark is found at lysine 162 and lysine 163. A disordered region spans residues 214-247; that stretch reads EPHEQSVPPAQEQLRPKPQLEQENIKSTPPPSDF. Positions 227 to 237 are enriched in basic and acidic residues; the sequence is LRPKPQLEQEN. Intrachain disulfides connect cysteine 336–cysteine 342 and cysteine 373–cysteine 383. Residues 368–578 enclose the NR LBD domain; sequence RNSYLCSTGG…EELLAFKVHP (211 aa). Heme-binding residues include cysteine 383 and histidine 567. The interaction with ZNHIT1 stretch occupies residues 396 to 578; it reads SGHEIWEEFS…EELLAFKVHP (183 aa).

Belongs to the nuclear hormone receptor family. NR1 subfamily. In terms of assembly, binds DNA as a monomer or a homodimer. Interacts with NCOA5 coactivator, leading to a strong increase of transcription of target genes. Interacts (via N-terminus) with KAT5. Interacts (via C-terminus) with HDAC1. Interacts with ZNHIT1. Interacts with SIAH2. Deacetylated by HDAC1. Acetylation and deacetylation regulate its transcriptional regulatory activity. Post-translationally, under more reducing intracellular redox conditions, Cys-383 is in its heme-bound state, which is optimal for recruitment of the NCOR1/HDAC3 corepressor complex and repression of target genes. When subjected to oxidative stress conditions, Cys-383 undergoes oxidation to form a disulfide bridge with Cys-373, also triggering a ligand switch that results in release of bound heme and derepression of target genes. In terms of processing, ubiquitinated by SIAH2; leading to its proteasomal degradation. Phosphorylated by CSNK1E; phosphorylation enhances its cytoplasmic localization.

The protein resides in the nucleus. Its subcellular location is the cytoplasm. Its activity is regulated as follows. The heme-bound form can bind gaseous signaling molecules such as CO and nitric oxide (NO) and NO can reverse its transcriptional repressor activity. In terms of biological role, transcriptional repressor which coordinates circadian rhythm and metabolic pathways in a heme-dependent manner. Integral component of the complex transcription machinery that governs circadian rhythmicity and forms a critical negative limb of the circadian clock by directly repressing the expression of core clock components BMAL1 and CLOCK. Also regulates genes involved in metabolic functions, including lipid metabolism and the inflammatory response. Acts as a receptor for heme which stimulates its interaction with the NCOR1/HDAC3 corepressor complex, enhancing transcriptional repression. Recognizes two classes of DNA response elements within the promoter of its target genes and can bind to DNA as either monomers or homodimers, depending on the nature of the response element. Binds as a monomer to a response element composed of the consensus half-site motif 5'-[A/G]GGTCA-3' preceded by an A/T-rich 5' sequence (RevRE), or as a homodimer to a direct repeat of the core motif spaced by two nuclegotides (RevDR-2). Acts as a potent competitive repressor of ROR alpha (RORA) function and also negatively regulates the expression of NR1D1. Regulates lipid and energy homeostasis in the skeletal muscle via repression of genes involved in lipid metabolism and myogenesis including: CD36, FABP3, FABP4, UCP3, SCD1 and MSTN. Regulates hepatic lipid metabolism via the repression of APOC3. Represses gene expression at a distance in macrophages by inhibiting the transcription of enhancer-derived RNAs (eRNAs). In addition to its activity as a repressor, can also act as a transcriptional activator. Acts as a transcriptional activator of the sterol regulatory element-binding protein 1 (SREBF1) and the inflammatory mediator interleukin-6 (IL6) in the skeletal muscle. Plays a role in the regulation of circadian sleep/wake cycle; essential for maintaining wakefulness during the dark phase or active period. Key regulator of skeletal muscle mitochondrial function; negatively regulates the skeletal muscle expression of core clock genes and genes involved in mitochondrial biogenesis, fatty acid beta-oxidation and lipid metabolism. May play a role in the circadian control of neutrophilic inflammation in the lung. The polypeptide is Nuclear receptor subfamily 1 group D member 2 (Rattus norvegicus (Rat)).